Consider the following 350-residue polypeptide: Small ribosomal subunit biogenesis GTPase RsgA (350 aa).

The tract at residues 1-30 (MSKRKLTQNQQRRIQSNNAKTLHRHQHRHK) is disordered. A compositionally biased stretch (polar residues) spans 7–20 (TQNQQRRIQSNNAK). Residues 21–30 (TLHRHQHRHK) show a composition bias toward basic residues. Residues 106 to 274 (HNQIVRPDYY…LIDSPGIREF (169 aa)) form the CP-type G domain. GTP-binding positions include 162-165 (NKAD) and 216-224 (GQSGVGKSS). 4 residues coordinate Zn(2+): Cys-298, Cys-303, His-305, and Cys-311.

Belongs to the TRAFAC class YlqF/YawG GTPase family. RsgA subfamily. Monomer. Associates with 30S ribosomal subunit, binds 16S rRNA. The cofactor is Zn(2+).

Its subcellular location is the cytoplasm. One of several proteins that assist in the late maturation steps of the functional core of the 30S ribosomal subunit. Helps release RbfA from mature subunits. May play a role in the assembly of ribosomal proteins into the subunit. Circularly permuted GTPase that catalyzes slow GTP hydrolysis, GTPase activity is stimulated by the 30S ribosomal subunit. In Histophilus somni (strain 2336) (Haemophilus somnus), this protein is Small ribosomal subunit biogenesis GTPase RsgA.